Consider the following 201-residue polypeptide: Reticulon-like protein B10 (201 aa).

Positions 14 to 201 constitute a Reticulon domain; sequence VADLIMWKNR…KPTNKIKKMQ (188 aa). 3 helical membrane-spanning segments follow: residues 25–45, 46–66, and 135–155; these read GGFLLLGSTTLLWFLFEKCGY, SFFPFVVNTQLLSVVILFLWA, and FLNFLTILYLGVVLSLLIPFL.

The protein localises to the endoplasmic reticulum membrane. The sequence is that of Reticulon-like protein B10 (RTNLB10) from Arabidopsis thaliana (Mouse-ear cress).